The following is a 511-amino-acid chain: RNA-splicing ligase RtcB homolog (511 aa).

5 residues coordinate Mn(2+): Asp-125, Cys-128, His-233, His-265, and His-359. 232–236 contacts GMP; the sequence is NHYAE. GMP contacts are provided by residues 359–360, 408–411, Ser-415, 434–437, and Lys-510; these read HN, GGTM, and HGAG. Residue His-434 is the GMP-histidine intermediate of the active site.

It belongs to the RtcB family. As to quaternary structure, catalytic component of the tRNA-splicing ligase complex. Mn(2+) is required as a cofactor.

The enzyme catalyses a 3'-end 3'-phospho-ribonucleotide-RNA + a 5'-end dephospho-ribonucleoside-RNA + GTP = a ribonucleotidyl-ribonucleotide-RNA + GMP + diphosphate. The catalysed reaction is a 3'-end 2',3'-cyclophospho-ribonucleotide-RNA + a 5'-end dephospho-ribonucleoside-RNA + GTP + H2O = a ribonucleotidyl-ribonucleotide-RNA + GMP + diphosphate + H(+). In terms of biological role, catalytic subunit of the tRNA-splicing ligase complex that acts by directly joining spliced tRNA halves to mature-sized tRNAs by incorporating the precursor-derived splice junction phosphate into the mature tRNA as a canonical 3',5'-phosphodiester. May act as an RNA ligase with broad substrate specificity, and may function toward other RNAs. The sequence is that of RNA-splicing ligase RtcB homolog from Plasmodium knowlesi (strain H).